The sequence spans 209 residues: APC/C-CDH1 modulator 1 (209 aa).

The tract at residues 1–38 (MISPSKKRTILSSKNINQKPRAVVKGNELRSPSKRRSQ) is disordered. Serine 48 bears the Phosphoserine mark. A Phosphothreonine modification is found at threonine 161. The residue at position 202 (serine 202) is a Phosphoserine.

In terms of assembly, interacts with CDH1, BMH1 and BMH2.

Functionally, negative regulator of GDH1, the activator protein that regulates the ubiquitin ligase activity and substrate specificity of the anaphase promoting complex/cyclosome (APC/C), and which is required for exit from mitosis, cytokinesis and formation of prereplicative complexes in G1. In Saccharomyces cerevisiae (strain ATCC 204508 / S288c) (Baker's yeast), this protein is APC/C-CDH1 modulator 1 (ACM1).